A 139-amino-acid polypeptide reads, in one-letter code: Nucleoside diphosphate kinase (139 aa).

K10, F58, R86, T92, R103, and N113 together coordinate ATP. H116 functions as the Pros-phosphohistidine intermediate in the catalytic mechanism.

This sequence belongs to the NDK family. As to quaternary structure, homotetramer. It depends on Mg(2+) as a cofactor.

It is found in the cytoplasm. The catalysed reaction is a 2'-deoxyribonucleoside 5'-diphosphate + ATP = a 2'-deoxyribonucleoside 5'-triphosphate + ADP. The enzyme catalyses a ribonucleoside 5'-diphosphate + ATP = a ribonucleoside 5'-triphosphate + ADP. Its function is as follows. Major role in the synthesis of nucleoside triphosphates other than ATP. The ATP gamma phosphate is transferred to the NDP beta phosphate via a ping-pong mechanism, using a phosphorylated active-site intermediate. The protein is Nucleoside diphosphate kinase of Phenylobacterium zucineum (strain HLK1).